Reading from the N-terminus, the 218-residue chain is Large ribosomal subunit protein uL3 (218 aa).

The protein belongs to the universal ribosomal protein uL3 family. In terms of assembly, part of the 50S ribosomal subunit. Forms a cluster with proteins L14 and L19.

In terms of biological role, one of the primary rRNA binding proteins, it binds directly near the 3'-end of the 23S rRNA, where it nucleates assembly of the 50S subunit. The polypeptide is Large ribosomal subunit protein uL3 (Corynebacterium glutamicum (strain R)).